A 223-amino-acid polypeptide reads, in one-letter code: Killer cell lectin-like receptor subfamily B member 1B allele B (223 aa).

Topologically, residues 1–45 (MDTAVVYADLHLARTGEPKHKSPPSLSPDTCQCPRWHRLALKLGC) are cytoplasmic. The ITIM motif signature appears at 5-10 (VVYADL). The LCK-binding motif motif lies at 31-34 (CQCP). The chain crosses the membrane as a helical; Signal-anchor for type II membrane protein span at residues 46 to 66 (ACLILLVLSVIGLGVLVLTLL). The Extracellular portion of the chain corresponds to 67–223 (QKPLIQNSPA…LKCECMCNGS (157 aa)). Positions 101 to 211 (HQDKCFHVSQ…CDSDNLWICQ (111 aa)) constitute a C-type lectin domain. Cystine bridges form between cysteine 122-cysteine 210 and cysteine 189-cysteine 202.

As to quaternary structure, homodimer; disulfide-linked. Interacts with tyrosine kinase LCK. Binds PTPN6/SHP-1 in a phosphorylation-dependent manner. In terms of tissue distribution, expressed in a subset of natural killer cells.

It localises to the membrane. Its function is as follows. Receptor for CLEC2D/OCIL. Ligand-binding contributes to inhibition of cytotoxic natural killer (NK) cells. May mediate MHC class I-independent 'missing-self' recognition of allografts, tumor cells and virus-infected cells. This chain is Killer cell lectin-like receptor subfamily B member 1B allele B, found in Rattus norvegicus (Rat).